Here is a 134-residue protein sequence, read N- to C-terminus: ATP synthase epsilon chain, chloroplastic (134 aa).

It belongs to the ATPase epsilon chain family. As to quaternary structure, F-type ATPases have 2 components, CF(1) - the catalytic core - and CF(0) - the membrane proton channel. CF(1) has five subunits: alpha(3), beta(3), gamma(1), delta(1), epsilon(1). CF(0) has three main subunits: a, b and c.

Its subcellular location is the plastid. The protein resides in the chloroplast thylakoid membrane. Produces ATP from ADP in the presence of a proton gradient across the membrane. The sequence is that of ATP synthase epsilon chain, chloroplastic from Liriodendron tulipifera (Tuliptree).